A 559-amino-acid chain; its full sequence is Actin-binding protein WASF1 (559 aa).

3 disordered regions span residues 170–202 (EDKRKEKRKQKQKNLDRPHEPEKVPRAPHDRRR), 304–383 (IENR…GVLH), and 412–490 (VHPL…HPST). A compositionally biased stretch (basic and acidic residues) spans 182–202 (KNLDRPHEPEKVPRAPHDRRR). A compositionally biased stretch (polar residues) spans 304-313 (IENRPQSPAT). The span at 322-332 (PTPPPPPPPLP) shows a compositional bias: pro residues. Over residues 333–346 (SALSTSSLRASMTS) the composition is skewed to low complexity. Arginine 341 is subject to Asymmetric dimethylarginine; alternate. An Omega-N-methylarginine; alternate modification is found at arginine 341. 3 stretches are compositionally biased toward pro residues: residues 347 to 360 (TPPPPVPPPPPPPA), 423 to 437 (LPPPPPPPPLPPPGI), and 460 to 477 (STAPGPHVPLMPPSPPSQ). A Phosphoserine modification is found at serine 489. The WH2 domain maps to 497 to 514 (ARSVLLEAIRKGIQLRKV).

Belongs to the SCAR/WAVE family. In terms of assembly, component of the WAVE1 complex composed of ABI2, CYFIP1 or CYFIP2, BRK1, NCKAP1 and WASF1/WAVE1. Within the complex, a heterodimer containing NCKAP1 and CYFIP1 interacts with a heterotrimer formed by WAVE1, ABI2 and BRK1. CYFIP2 binds to activated RAC1 which causes the complex to dissociate, releasing activated WASF1. The complex can also be activated by NCK1. Binds actin and the Arp2/3 complex. Interacts with BAIAP2. Interacts with SHANK3; the interaction mediates the association of SHANK3 with the WAVE1 complex. Interacts with ABI1 (via N-terminus). Interacts with SORBS2; this interaction greatly enhances phosphorylation by ABL1 and dephosphorylation by PTPN12 and might mediate partial to focal adhesion sites.

It localises to the cytoplasm. Its subcellular location is the cytoskeleton. The protein localises to the synapse. It is found in the cell junction. The protein resides in the focal adhesion. Downstream effector molecule involved in the transmission of signals from tyrosine kinase receptors and small GTPases to the actin cytoskeleton. Promotes formation of actin filaments. Part of the WAVE complex that regulates lamellipodia formation. The WAVE complex regulates actin filament reorganization via its interaction with the Arp2/3 complex. As component of the WAVE1 complex, required for BDNF-NTRK2 endocytic trafficking and signaling from early endosomes. Also involved in the regulation of mitochondrial dynamics. The sequence is that of Actin-binding protein WASF1 (WASF1) from Pongo abelii (Sumatran orangutan).